We begin with the raw amino-acid sequence, 167 residues long: uncharacterized protein (167 aa).

Residues 70–118 (KIVELRKAMESIITELAYIKGELKGLQEKGESKVERKEIIEEKIQKAMV) are a coiled coil. The span at 128-155 (EKEERKPAKESKRREHDVIIPEGKKEER) shows a compositional bias: basic and acidic residues. The disordered stretch occupies residues 128 to 167 (EKEERKPAKESKRREHDVIIPEGKKEERTDDGEDGLIVCD).

This is an uncharacterized protein from Archaeoglobus fulgidus (strain ATCC 49558 / DSM 4304 / JCM 9628 / NBRC 100126 / VC-16).